The primary structure comprises 346 residues: Very-long-chain 3-oxoacyl-CoA reductase (346 aa).

A helical transmembrane segment spans residues 19–39 (LIYGVLFVGVYKITTFTLSVG). Positions 65, 119, 146, 220, 224, 253, and 255 each coordinate NADP(+). The Proton donor role is filled by tyrosine 220. Lysine 224 (lowers pKa of active site Tyr) is an active-site residue.

The protein belongs to the short-chain dehydrogenases/reductases (SDR) family.

It localises to the endoplasmic reticulum membrane. It catalyses the reaction a very-long-chain (3R)-3-hydroxyacyl-CoA + NADP(+) = a very-long-chain 3-oxoacyl-CoA + NADPH + H(+). It participates in lipid metabolism; fatty acid biosynthesis. Its function is as follows. Component of the microsomal membrane bound fatty acid elongation system, which produces the 26-carbon very long-chain fatty acids (VLCFA) from palmitate. Catalyzes the reduction of the 3-ketoacyl-CoA intermediate that is formed in each cycle of fatty acid elongation. VLCFAs serve as precursors for ceramide and sphingolipids. The polypeptide is Very-long-chain 3-oxoacyl-CoA reductase (Debaryomyces hansenii (strain ATCC 36239 / CBS 767 / BCRC 21394 / JCM 1990 / NBRC 0083 / IGC 2968) (Yeast)).